A 141-amino-acid chain; its full sequence is Large ribosomal subunit protein uL11 (141 aa).

This sequence belongs to the universal ribosomal protein uL11 family. As to quaternary structure, part of the ribosomal stalk of the 50S ribosomal subunit. Interacts with L10 and the large rRNA to form the base of the stalk. L10 forms an elongated spine to which L12 dimers bind in a sequential fashion forming a multimeric L10(L12)X complex. In terms of processing, one or more lysine residues are methylated.

Functionally, forms part of the ribosomal stalk which helps the ribosome interact with GTP-bound translation factors. The sequence is that of Large ribosomal subunit protein uL11 from Amoebophilus asiaticus (strain 5a2).